A 264-amino-acid polypeptide reads, in one-letter code: MDNRPIGFLDSGVGGLTVVRELMRQLPHEEVIYIGDSARAPYGPRPAEQIRAYTWQLVNFLLTKDVKMIVIACNTATAVVWEEVKEKLDIPVLGVILPGASAAIKSTASGRIGVIGTPMTVSSDIYRQKIEALSPEMQVESLACPKFVPLVESNELHSSLTKKVVYETLQPLAGRVDTLVLGCTHYPLLRPIIQNRMGPDVKLIDSGAECVRDISVLLNYFEINRSREKQELNHQFYTTANAKSFSEIAESWLRLKVNVEHVSL.

Substrate-binding positions include 10–11 (DS) and 42–43 (YG). Cys-73 (proton donor/acceptor) is an active-site residue. 74-75 (NT) is a binding site for substrate. Catalysis depends on Cys-183, which acts as the Proton donor/acceptor. Substrate is bound at residue 184–185 (TH).

Belongs to the aspartate/glutamate racemases family.

It carries out the reaction L-glutamate = D-glutamate. The protein operates within cell wall biogenesis; peptidoglycan biosynthesis. In terms of biological role, provides the (R)-glutamate required for cell wall biosynthesis. The chain is Glutamate racemase from Streptococcus sanguinis (strain SK36).